The following is a 170-amino-acid chain: N-glycosidase R617 (170 aa).

The protein belongs to the YbiA family.

The enzyme catalyses 2,5-diamino-6-hydroxy-4-(5-phosphoribosylamino)-pyrimidine + H2O = 2,5,6-triamino-4-hydroxypyrimidine + D-ribose 5-phosphate. It carries out the reaction 5-amino-6-(5-phospho-D-ribosylamino)uracil + H2O = 5,6-diaminouracil + D-ribose 5-phosphate. Functionally, catalyzes the hydrolysis of the N-glycosidic bond in the first two intermediates of riboflavin biosynthesis, which are highly reactive metabolites, yielding relatively innocuous products. Thus, can divert a surplus of harmful intermediates into relatively harmless products and pre-empt the damage these intermediates would otherwise do. May act on other substrates in vivo. In Acanthamoeba polyphaga mimivirus (APMV), this protein is N-glycosidase R617.